The chain runs to 337 residues: Palmitoyltransferase ZDHHC15 (337 aa).

Over 1-20 (MRRGWKMALSGGLRCCRRVL) the chain is Cytoplasmic. A helical transmembrane segment spans residues 21–41 (SWVPVLVIVLVVLWSYYAYVF). The Lumenal portion of the chain corresponds to 42–56 (ELCLVTVLSPAEKVI). A helical transmembrane segment spans residues 57-77 (YLILYHAIFVFFAWTYWKSIF). The Cytoplasmic segment spans residues 78–172 (TLPQQPNQKF…NNCIGFSNYK (95 aa)). In terms of domain architecture, DHHC spans 129 to 179 (RFCDRCHLIKPDRCHHCSVCAMCVLKMDHHCPWVNNCIGFSNYKFFLQFLA). Residues Cys-131, Cys-134, His-144, Cys-145, Cys-148, Cys-151, and His-158 each contribute to the Zn(2+) site. Cys-159 (S-palmitoyl cysteine intermediate) is an active-site residue. Cys-165 contacts Zn(2+). A helical membrane pass occupies residues 173 to 193 (FFLQFLAYSVLYCLYIATTVF). Over 194–210 (SYFIKYWRGELPSVRSK) the chain is Lumenal. Residues 211–234 (FHVLFLLFVACMFFVSLVILFGYH) traverse the membrane as a helical segment. Topologically, residues 235-337 (CWLVSRNKTT…LSSLAVESET (103 aa)) are cytoplasmic. Residues 293–337 (HSFPMRSMNESQNPLLANEEPWEDNEDESQDYPEGLSSLAVESET) form a disordered region. Acidic residues predominate over residues 312 to 323 (EPWEDNEDESQD).

Belongs to the DHHC palmitoyltransferase family. In terms of processing, autopalmitoylated (in vitro). In terms of tissue distribution, in brain, expressed in both excitatory and inhibitory neurons but not expressed by glial cells.

Its subcellular location is the golgi apparatus membrane. It localises to the postsynaptic density. It carries out the reaction L-cysteinyl-[protein] + hexadecanoyl-CoA = S-hexadecanoyl-L-cysteinyl-[protein] + CoA. The enzyme catalyses L-cysteinyl-[protein] + tetradecanoyl-CoA = S-tetradecanoyl-L-cysteinyl-[protein] + CoA. It catalyses the reaction L-cysteinyl-[protein] + octadecanoyl-CoA = S-octadecanoyl-L-cysteinyl-[protein] + CoA. Functionally, palmitoyltransferase that catalyzes the addition of palmitate onto various protein substrates. Has no stringent fatty acid selectivity and in addition to palmitate can also transfer onto target proteins myristate from tetradecanoyl-CoA and stearate from octadecanoyl-CoA. Palmitoylates IGF2R and SORT1, promoting their partitioning to an endosomal membrane subdomain where they can interact with the retromer cargo-selective complex. Thereby, regulates retrograde transport from endosomes to the Golgi apparatus of these lysosomal sorting receptors and plays a role in trafficking of lysosomal proteins. In the nervous system, catalyzes the palmitoylation of DLG4/PSD95 and regulates its synaptic clustering and function in synaptogenesis. Could be involved in the differentiation of dopaminergic neurons and the development of the diencephalon. Could also catalyze the palmitoylation of GAP43. Could also palmitoylate DNAJC5 and regulate its localization to the Golgi membrane. Could also palmitoylate FYN as shown in vitro. May palmitoylate CALHM3 subunit of gustatory voltage-gated ion channels and modulate channel gating and kinetics. In Rattus norvegicus (Rat), this protein is Palmitoyltransferase ZDHHC15.